We begin with the raw amino-acid sequence, 335 residues long: NAC domain-containing protein 60 (335 aa).

The 143-residue stretch at 14-156 (TFPGFKFSPT…ALVICRLRRN (143 aa)) folds into the NAC domain. Residues 112–162 (IGTKRTLVFHIGRAPKGGRTEWLMHEYCMIGVSLDALVICRLRRNTEFQGS) mediate DNA binding. Residues 315–335 (ARWDVVVWLLVMIAVLVFYLV) form a helical membrane-spanning segment.

In terms of tissue distribution, expressed in roots, rosette leaves, cauline leaves, shoot apex, stems and flowers.

Its subcellular location is the membrane. The protein resides in the nucleus. Its function is as follows. Transcriptional activator activated by proteolytic cleavage through regulated intramembrane proteolysis (RIP). Transcription factor involved in modulation of abscisic acid (ABA) signaling. Attenuates ABA sensitivity and glucose-induced ABA accumulation. Reduces the expression of ABI4 gene. The sequence is that of NAC domain-containing protein 60 from Arabidopsis thaliana (Mouse-ear cress).